Reading from the N-terminus, the 93-residue chain is RNA-binding protein Hfq (93 aa).

Residues 9-68 enclose the Sm domain; sequence DPFLNALRRERVPVSIYLVNGIKLQGQVESFDQFVILLKNTVSQMVYKHAISTVVPARPF. The segment at 70-93 is disordered; the sequence is VNSHTAAPSPAGGFNGQQDDNNDQ.

It belongs to the Hfq family. As to quaternary structure, homohexamer.

Functionally, RNA chaperone that binds small regulatory RNA (sRNAs) and mRNAs to facilitate mRNA translational regulation in response to envelope stress, environmental stress and changes in metabolite concentrations. Also binds with high specificity to tRNAs. The protein is RNA-binding protein Hfq of Shewanella sediminis (strain HAW-EB3).